The following is a 376-amino-acid chain: tRNA-specific 2-thiouridylase MnmA (376 aa).

Residues 16-23 and Leu-42 contribute to the ATP site; that span reads AMSGGVDS. The active-site Nucleophile is Cys-111. Cysteines 111 and 210 form a disulfide. Residue Gly-135 participates in ATP binding. Residues 158 to 160 form an interaction with tRNA region; sequence KDQ. Cys-210 (cysteine persulfide intermediate) is an active-site residue.

This sequence belongs to the MnmA/TRMU family.

It localises to the cytoplasm. The catalysed reaction is S-sulfanyl-L-cysteinyl-[protein] + uridine(34) in tRNA + AH2 + ATP = 2-thiouridine(34) in tRNA + L-cysteinyl-[protein] + A + AMP + diphosphate + H(+). In terms of biological role, catalyzes the 2-thiolation of uridine at the wobble position (U34) of tRNA, leading to the formation of s(2)U34. The sequence is that of tRNA-specific 2-thiouridylase MnmA from Streptomyces avermitilis (strain ATCC 31267 / DSM 46492 / JCM 5070 / NBRC 14893 / NCIMB 12804 / NRRL 8165 / MA-4680).